The chain runs to 858 residues: Beta-galactosidase 6 (858 aa).

An N-terminal signal peptide occupies residues 1–30; it reads MAAATVGVLLRLLLLPVVVVVSLLVGASRA. N-linked (GlcNAc...) asparagine glycosylation occurs at N32. The Proton donor role is filled by E189. E258 serves as the catalytic Nucleophile. N-linked (GlcNAc...) asparagine glycans are attached at residues N259, N482, N507, N595, and N830. The region spanning 772–858 is the SUEL-type lectin domain; the sequence is QTQGPALRLE…KSLVVEAACS (87 aa).

Belongs to the glycosyl hydrolase 35 family.

It is found in the secreted. It localises to the extracellular space. Its subcellular location is the apoplast. It catalyses the reaction Hydrolysis of terminal non-reducing beta-D-galactose residues in beta-D-galactosides.. In terms of biological role, releases galactose by hydrolysis of plant cell wall galactose-containing polysaccharides such as galacto-xyloglucan, pectic galactan and galactan (in vitro). This chain is Beta-galactosidase 6, found in Oryza sativa subsp. japonica (Rice).